The chain runs to 207 residues: NAD(P)H dehydrogenase (quinone) (207 aa).

The Flavodoxin-like domain occupies 3–194 (VQIIFYSMYG…EMAKFQGRHV (192 aa)). Residues 9–14 (SMYGHI) and 82–84 (TRF) contribute to the FMN site. An NAD(+)-binding site is contributed by tyrosine 11. A substrate-binding site is contributed by tryptophan 102. FMN-binding positions include 117–123 (STATQHG) and histidine 138.

It belongs to the WrbA family. The cofactor is FMN.

The enzyme catalyses a quinone + NADH + H(+) = a quinol + NAD(+). It catalyses the reaction a quinone + NADPH + H(+) = a quinol + NADP(+). The sequence is that of NAD(P)H dehydrogenase (quinone) from Aromatoleum aromaticum (strain DSM 19018 / LMG 30748 / EbN1) (Azoarcus sp. (strain EbN1)).